Reading from the N-terminus, the 174-residue chain is MQQYIAGRYAQSLYAVCGPRLESDANKFLGLLSENNFLSFAKVKTSTKLHVLDRLHLPCELKNLCKLLLANHRGFLCTTVLLGYIEIVKKNRKEADARVESYSRLSATAKKEVADALLIKFPYLKKINIAQKVNRSILGGLTIKINSIMIDLSIAGRLAKCKSIGQSTILEIFQ.

Belongs to the ATPase delta chain family. In terms of assembly, F-type ATPases have 2 components, F(1) - the catalytic core - and F(0) - the membrane proton channel. F(1) has five subunits: alpha(3), beta(3), gamma(1), delta(1), epsilon(1). F(0) has three main subunits: a(1), b(2) and c(10-14). The alpha and beta chains form an alternating ring which encloses part of the gamma chain. F(1) is attached to F(0) by a central stalk formed by the gamma and epsilon chains, while a peripheral stalk is formed by the delta and b chains.

The protein resides in the cell inner membrane. Its function is as follows. F(1)F(0) ATP synthase produces ATP from ADP in the presence of a proton or sodium gradient. F-type ATPases consist of two structural domains, F(1) containing the extramembraneous catalytic core and F(0) containing the membrane proton channel, linked together by a central stalk and a peripheral stalk. During catalysis, ATP synthesis in the catalytic domain of F(1) is coupled via a rotary mechanism of the central stalk subunits to proton translocation. Functionally, this protein is part of the stalk that links CF(0) to CF(1). It either transmits conformational changes from CF(0) to CF(1) or is implicated in proton conduction. This chain is ATP synthase subunit delta, found in Neorickettsia sennetsu (strain ATCC VR-367 / Miyayama) (Ehrlichia sennetsu).